Reading from the N-terminus, the 448-residue chain is Divalent metal cation transporter MntH (448 aa).

11 consecutive transmembrane segments (helical) span residues 41–61 (LFAF…PGNW), 69–89 (SEFG…AVLL), 117–137 (GFVL…AEVI), 147–167 (FGIP…LVLF), 176–196 (IEVI…AEMV), 215–235 (IVTN…TVMP), 270–290 (FSLT…AAAF), 307–327 (LLNP…ALLA), 363–383 (VLAI…GINE), 384–404 (LLIF…IPLV), and 424–444 (IISW…LFYT).

Belongs to the NRAMP family.

The protein localises to the cell membrane. In terms of biological role, h(+)-stimulated, divalent metal cation uptake system. The chain is Divalent metal cation transporter MntH from Listeria welshimeri serovar 6b (strain ATCC 35897 / DSM 20650 / CCUG 15529 / CIP 8149 / NCTC 11857 / SLCC 5334 / V8).